The sequence spans 59 residues: UPF0291 protein CPR_1073 (59 aa).

The segment at 1–30 (MNIDELTKRINELHKKHKEEGLSEDEHKER) is disordered.

The protein belongs to the UPF0291 family.

It localises to the cytoplasm. This chain is UPF0291 protein CPR_1073, found in Clostridium perfringens (strain SM101 / Type A).